Consider the following 1378-residue polypeptide: Hybrid signal transduction histidine kinase H (1378 aa).

Positions 212-242 (KEKFKKEELINDFKSRLETLENKIDQRVDER) form a coiled coil. The 72-residue stretch at 243-314 (IETRFKYVLE…NNNNNNNNNN (72 aa)) folds into the PAS domain. Residues 294 to 337 (YQQHNNNNNNNNNNNNNNNNNNNNNSNNKSPIINSPNTTSPTNT) form a disordered region. Positions 298–337 (NNNNNNNNNNNNNNNNNNNNNSNNKSPIINSPNTTSPTNT) are enriched in low complexity. A Histidine kinase domain is found at 498 to 805 (TMSHEMRTPL…SFHFLVEVFF (308 aa)). Residue His501 is modified to Phosphohistidine; by autocatalysis. Low complexity predominate over residues 663 to 696 (NNSNNSNNNHNHNNNNNNNNHLNCSGSFNNNGFN). Disordered stretches follow at residues 663–717 (NNSN…DKHC), 905–924 (TNNNNSNNDNNNNNTTSTTT), and 1103–1213 (NNSN…HPNP). Residues 697-714 (HGHHHHHHHHHHHHHHHD) show a composition bias toward basic residues. Composition is skewed to low complexity over residues 1103–1119 (NNSNNNINNNNNNSGSS) and 1136–1187 (SPSL…NNNN). Positions 1188–1206 (LNHYNSDSILSSDLSPQQH) are enriched in polar residues. Residues 1244–1364 (KIMVAEDSLV…ILAVELKRAW (121 aa)) form the Response regulatory domain. At Asp1297 the chain carries 4-aspartylphosphate.

Activation probably requires transfer of a phosphate group between a histidine in the kinase core (transmitter) domain and an aspartate of the receiver domain.

The catalysed reaction is ATP + protein L-histidine = ADP + protein N-phospho-L-histidine.. Functionally, acts as a receptor histidine kinase for a signal transduction pathway. This protein undergoes an ATP-dependent autophosphorylation at a conserved histidine residue in the kinase core, and a phosphoryl group is then transferred to a conserved aspartate residue in the receiver domain. The polypeptide is Hybrid signal transduction histidine kinase H (dhkH) (Dictyostelium discoideum (Social amoeba)).